The chain runs to 906 residues: Protein translocase subunit SecA (906 aa).

ATP-binding positions include Gln-87, 105-109 (GEGKT), and Asp-513. A disordered region spans residues 860 to 906 (QVNKGEVVSDENTGDDTFVRNEKKVGRNEPCPCGSGKKYKQCHGKLD). Basic and acidic residues predominate over residues 876–886 (TFVRNEKKVGR). The Zn(2+) site is built by Cys-890, Cys-892, Cys-901, and His-902. Residues 896-906 (KKYKQCHGKLD) are compositionally biased toward basic residues.

The protein belongs to the SecA family. As to quaternary structure, monomer and homodimer. Part of the essential Sec protein translocation apparatus which comprises SecA, SecYEG and auxiliary proteins SecDF-YajC and YidC. The cofactor is Zn(2+).

It localises to the cell inner membrane. The protein localises to the cytoplasm. It catalyses the reaction ATP + H2O + cellular proteinSide 1 = ADP + phosphate + cellular proteinSide 2.. Part of the Sec protein translocase complex. Interacts with the SecYEG preprotein conducting channel. Has a central role in coupling the hydrolysis of ATP to the transfer of proteins into and across the cell membrane, serving both as a receptor for the preprotein-SecB complex and as an ATP-driven molecular motor driving the stepwise translocation of polypeptide chains across the membrane. This chain is Protein translocase subunit SecA, found in Psychromonas ingrahamii (strain DSM 17664 / CCUG 51855 / 37).